The following is a 256-amino-acid chain: tRNA pseudouridine synthase A (256 aa).

Asp-52 serves as the catalytic Nucleophile. Tyr-111 is a binding site for substrate.

This sequence belongs to the tRNA pseudouridine synthase TruA family. As to quaternary structure, homodimer.

It carries out the reaction uridine(38/39/40) in tRNA = pseudouridine(38/39/40) in tRNA. Formation of pseudouridine at positions 38, 39 and 40 in the anticodon stem and loop of transfer RNAs. The protein is tRNA pseudouridine synthase A of Paramagnetospirillum magneticum (strain ATCC 700264 / AMB-1) (Magnetospirillum magneticum).